The primary structure comprises 445 residues: Phosphoglucosamine mutase (445 aa).

Residue Ser-102 is the Phosphoserine intermediate of the active site. Positions 102, 240, 242, and 244 each coordinate Mg(2+). Position 102 is a phosphoserine (Ser-102).

Belongs to the phosphohexose mutase family. It depends on Mg(2+) as a cofactor. Post-translationally, activated by phosphorylation.

The catalysed reaction is alpha-D-glucosamine 1-phosphate = D-glucosamine 6-phosphate. Its function is as follows. Catalyzes the conversion of glucosamine-6-phosphate to glucosamine-1-phosphate. The sequence is that of Phosphoglucosamine mutase from Mycobacterium marinum (strain ATCC BAA-535 / M).